Consider the following 486-residue polypeptide: FAD-dependent oxidoreductase domain-containing protein 1 (486 aa).

Residues 66-86 form a helical membrane-spanning segment; the sequence is VVVVGGGVLGLSVAYWLKQLE.

In terms of assembly, associates with components of the mitochondrial respiratory chain complex I. FAD is required as a cofactor.

The protein resides in the mitochondrion inner membrane. Functionally, required for the assembly of the mitochondrial membrane respiratory chain NADH dehydrogenase (Complex I). Involved in mid-late stages of complex I assembly. The protein is FAD-dependent oxidoreductase domain-containing protein 1 (FOXRED1) of Macaca fascicularis (Crab-eating macaque).